A 235-amino-acid polypeptide reads, in one-letter code: Ribonuclease 3 (235 aa).

Positions 6–135 (LISLEKILGF…VIGAVYFDCG (130 aa)) constitute an RNase III domain. A Mg(2+)-binding site is contributed by E48. D52 is an active-site residue. Mg(2+)-binding residues include N121 and E124. The active site involves E124. In terms of domain architecture, DRBM spans 162–231 (DEKTTLQELL…AKKALELLKN (70 aa)).

This sequence belongs to the ribonuclease III family. In terms of assembly, homodimer. Requires Mg(2+) as cofactor.

Its subcellular location is the cytoplasm. It catalyses the reaction Endonucleolytic cleavage to 5'-phosphomonoester.. Digests double-stranded RNA. Involved in the processing of primary rRNA transcript to yield the immediate precursors to the large and small rRNAs (23S and 16S). Processes some mRNAs, and tRNAs when they are encoded in the rRNA operon. Processes pre-crRNA and tracrRNA of type II CRISPR loci if present in the organism. In Carboxydothermus hydrogenoformans (strain ATCC BAA-161 / DSM 6008 / Z-2901), this protein is Ribonuclease 3.